Reading from the N-terminus, the 51-residue chain is DNA-binding protein (51 aa).

Positions 1–51 are disordered; the sequence is MVYRRRRSRSADGTYTRRRRSSGYRRRPGRPRTYRRSRSATRRSGYRRRRY. A run of 2 repeats spans residues 5–10 and 17–22. The tract at residues 5-22 is 2 X 6 AA repeats of R-R-R-R-S-S; that stretch reads RRRSRSADGTYTRRRRSS. Basic residues predominate over residues 16–51; the sequence is TRRRRSSGYRRRPGRPRTYRRSRSATRRSGYRRRRY.

Probably phosphorylated in infected cells.

The protein localises to the virion. In terms of biological role, thought to be responsible for DNA condensation during packaging of the nucleocapsids. The sequence is that of DNA-binding protein (P6.5) from Orgyia pseudotsugata (Douglas-fir tussock moth).